The primary structure comprises 67 residues: Protein C' (67 aa).

Belongs to the rhabdoviruses C protein family.

In terms of biological role, seems to stimulates transcription by the viral polymerase. May play a role in viral pathogenesis or transmission by insects vectors. This chain is Protein C' (P), found in Aedes (Bovine).